The primary structure comprises 268 residues: 4-hydroxy-tetrahydrodipicolinate reductase (268 aa).

Residues 10 to 15 (GASGRM) and D36 contribute to the NAD(+) site. Residue R37 participates in NADP(+) binding. NAD(+) is bound by residues 99 to 101 (GTT) and 123 to 126 (SANM). The active-site Proton donor/acceptor is the H156. Position 157 (H157) interacts with (S)-2,3,4,5-tetrahydrodipicolinate. K160 serves as the catalytic Proton donor. Position 166 to 167 (166 to 167 (GT)) interacts with (S)-2,3,4,5-tetrahydrodipicolinate.

This sequence belongs to the DapB family.

Its subcellular location is the cytoplasm. The enzyme catalyses (S)-2,3,4,5-tetrahydrodipicolinate + NAD(+) + H2O = (2S,4S)-4-hydroxy-2,3,4,5-tetrahydrodipicolinate + NADH + H(+). It carries out the reaction (S)-2,3,4,5-tetrahydrodipicolinate + NADP(+) + H2O = (2S,4S)-4-hydroxy-2,3,4,5-tetrahydrodipicolinate + NADPH + H(+). The protein operates within amino-acid biosynthesis; L-lysine biosynthesis via DAP pathway; (S)-tetrahydrodipicolinate from L-aspartate: step 4/4. Catalyzes the conversion of 4-hydroxy-tetrahydrodipicolinate (HTPA) to tetrahydrodipicolinate. The sequence is that of 4-hydroxy-tetrahydrodipicolinate reductase from Burkholderia pseudomallei (strain 1710b).